Consider the following 216-residue polypeptide: Large ribosomal subunit protein uL1 (216 aa).

The protein belongs to the universal ribosomal protein uL1 family. In terms of assembly, component of the large ribosomal subunit.

It is found in the cytoplasm. Its function is as follows. Component of the large ribosomal subunit. The ribosome is a large ribonucleoprotein complex responsible for the synthesis of proteins in the cell. This Danio rerio (Zebrafish) protein is Large ribosomal subunit protein uL1 (rpl10a).